A 537-amino-acid polypeptide reads, in one-letter code: CTP synthase (537 aa).

The amidoligase domain stretch occupies residues 1–267 (MTKYIFVTGG…DQIVLDHFDV (267 aa)). Serine 13 provides a ligand contact to CTP. A UTP-binding site is contributed by serine 13. 14 to 19 (SIGKGI) provides a ligand contact to ATP. Tyrosine 54 is a binding site for L-glutamine. ATP is bound at residue aspartate 71. The Mg(2+) site is built by aspartate 71 and glutamate 141. CTP contacts are provided by residues 148 to 150 (DIE), 188 to 193 (KTKPTQ), and lysine 224. UTP-binding positions include 188–193 (KTKPTQ) and lysine 224. Positions 292–535 (KIALVGKYVA…IDAANQTGKV (244 aa)) constitute a Glutamine amidotransferase type-1 domain. Glycine 354 is a binding site for L-glutamine. The active-site Nucleophile; for glutamine hydrolysis is the cysteine 381. Residues 382 to 385 (LGMQ), glutamate 405, and arginine 463 each bind L-glutamine. Active-site residues include histidine 508 and glutamate 510.

Belongs to the CTP synthase family. As to quaternary structure, homotetramer.

It catalyses the reaction UTP + L-glutamine + ATP + H2O = CTP + L-glutamate + ADP + phosphate + 2 H(+). It carries out the reaction L-glutamine + H2O = L-glutamate + NH4(+). The enzyme catalyses UTP + NH4(+) + ATP = CTP + ADP + phosphate + 2 H(+). It functions in the pathway pyrimidine metabolism; CTP biosynthesis via de novo pathway; CTP from UDP: step 2/2. With respect to regulation, allosterically activated by GTP, when glutamine is the substrate; GTP has no effect on the reaction when ammonia is the substrate. The allosteric effector GTP functions by stabilizing the protein conformation that binds the tetrahedral intermediate(s) formed during glutamine hydrolysis. Inhibited by the product CTP, via allosteric rather than competitive inhibition. In terms of biological role, catalyzes the ATP-dependent amination of UTP to CTP with either L-glutamine or ammonia as the source of nitrogen. Regulates intracellular CTP levels through interactions with the four ribonucleotide triphosphates. The protein is CTP synthase of Lactiplantibacillus plantarum (strain ATCC BAA-793 / NCIMB 8826 / WCFS1) (Lactobacillus plantarum).